A 573-amino-acid chain; its full sequence is Developmental and secondary metabolism regulator VEL1 (573 aa).

The Velvet domain occupies 26-220 (NRHLWYQLTV…ADQGCRVRIR (195 aa)). The Nuclear localization signal signature appears at 40–45 (ERARAC). Residues 222 to 520 (DVRMRKRDGK…STGGKRKHDH (299 aa)) are disordered. Over residues 230-245 (GKGSGFDRRGEEEYSR) the composition is skewed to basic and acidic residues. Composition is skewed to pro residues over residues 291–310 (APPP…PPAA) and 341–351 (APIPPATPTGP). Over residues 352–363 (YPTSSAAPSPYA) the composition is skewed to low complexity. Over residues 379–389 (PPAPSASPAPP) the composition is skewed to pro residues. The span at 432 to 448 (TPASQPTYSTPASQPTY) shows a compositional bias: polar residues. Residues 458-475 (SAPPPAPYSAPAPPPPRP) show a composition bias toward pro residues. The interval 476–504 (SMSQSSLAPLKIASLVSPLPPIEAQTEPL) is PEST.

The protein belongs to the velvet family. VeA subfamily. In terms of assembly, component of the heterotrimeric velvet complex composed of LAE1, VEL1 and VEL2; VEL1 acting as a bridging protein between LAE1 and VEL2. Interacts with LAE1.

It is found in the nucleus. The protein localises to the cytoplasm. In terms of biological role, component of the velvet transcription factor complex that controls sexual/asexual developmental ratio in response to light, promoting sexual development in the darkness while stimulating asexual sporulation under illumination. The velvet complex hat acts as a global regulator for secondary metabolite gene expression. Regulates expression of the carbohydrate-active enzyme gene clusters. The chain is Developmental and secondary metabolism regulator VEL1 from Hypocrea jecorina (strain QM6a) (Trichoderma reesei).